Here is a 210-residue protein sequence, read N- to C-terminus: Thiamine-phosphate synthase 2 (210 aa).

Residues 38–42 and Asp-70 contribute to the 4-amino-2-methyl-5-(diphosphooxymethyl)pyrimidine site; that span reads QLREK. Asp-71 and Glu-90 together coordinate Mg(2+). A 4-amino-2-methyl-5-(diphosphooxymethyl)pyrimidine-binding site is contributed by Thr-109. Residue 135–137 coordinates 2-[(2R,5Z)-2-carboxy-4-methylthiazol-5(2H)-ylidene]ethyl phosphate; that stretch reads TTT. 4-amino-2-methyl-5-(diphosphooxymethyl)pyrimidine is bound at residue Lys-138. Gly-165 is a 2-[(2R,5Z)-2-carboxy-4-methylthiazol-5(2H)-ylidene]ethyl phosphate binding site.

It belongs to the thiamine-phosphate synthase family. Mg(2+) serves as cofactor.

The enzyme catalyses 2-[(2R,5Z)-2-carboxy-4-methylthiazol-5(2H)-ylidene]ethyl phosphate + 4-amino-2-methyl-5-(diphosphooxymethyl)pyrimidine + 2 H(+) = thiamine phosphate + CO2 + diphosphate. It carries out the reaction 2-(2-carboxy-4-methylthiazol-5-yl)ethyl phosphate + 4-amino-2-methyl-5-(diphosphooxymethyl)pyrimidine + 2 H(+) = thiamine phosphate + CO2 + diphosphate. The catalysed reaction is 4-methyl-5-(2-phosphooxyethyl)-thiazole + 4-amino-2-methyl-5-(diphosphooxymethyl)pyrimidine + H(+) = thiamine phosphate + diphosphate. Its pathway is cofactor biosynthesis; thiamine diphosphate biosynthesis; thiamine phosphate from 4-amino-2-methyl-5-diphosphomethylpyrimidine and 4-methyl-5-(2-phosphoethyl)-thiazole: step 1/1. In terms of biological role, condenses 4-methyl-5-(beta-hydroxyethyl)thiazole monophosphate (THZ-P) and 2-methyl-4-amino-5-hydroxymethyl pyrimidine pyrophosphate (HMP-PP) to form thiamine monophosphate (TMP). The chain is Thiamine-phosphate synthase 2 from Streptococcus pneumoniae serotype 4 (strain ATCC BAA-334 / TIGR4).